A 210-amino-acid chain; its full sequence is Protein SgcE (210 aa).

Ser6 is a binding site for substrate. 3 residues coordinate a divalent metal cation: His31, Asp33, and His64. Asp33 (proton acceptor) is an active-site residue. Substrate contacts are provided by residues His64, 140–143 (DGQG), 169–171 (DGG), and 191–192 (GR). Residue Asp169 coordinates a divalent metal cation. Asp169 serves as the catalytic Proton donor.

It belongs to the ribulose-phosphate 3-epimerase family. Co(2+) serves as cofactor. Fe(2+) is required as a cofactor. Requires Mn(2+) as cofactor. It depends on Zn(2+) as a cofactor.

The protein operates within carbohydrate degradation. Its function is as follows. Probable pentose-5-phosphate 3-epimerase. This is Protein SgcE (sgcE) from Escherichia coli (strain K12).